A 670-amino-acid chain; its full sequence is Leiomodin-3 (670 aa).

Disordered stretches follow at residues 34–72, 94–120, 139–165, and 202–274; these read EMDD…EEID, EIAP…GSFD, EEER…EDKV, and EDKV…NWVP. Composition is skewed to basic and acidic residues over residues 40–63, 97–112, 153–163, 205–214, and 249–261; these read PDER…RDCT, PDER…DQTD, TNEEHEAKNED, VCDKPVKTDL, and TETK…KEDS. Residues 150–183 are a coiled coil; the sequence is SQKTNEEHEAKNEDKVEELELVYEEIVEEVEGGQ. Residues 464-494 are a coiled coil; the sequence is DRQRQQRMEEQKLQQMKEQRKVMEMYEDSLN. Residues 517-556 form a disordered region; that stretch reads NGAEDIPEDSPEPSPQPSPPHQLCKTQHLAPQQHPPNLST. The WH2 domain maps to 637-656; the sequence is PRDHLLSEIRQSNVAYLKAV.

This sequence belongs to the tropomodulin family. Expressed in muscle (at protein level).

It is found in the cytoplasm. The protein resides in the myofibril. The protein localises to the sarcomere. It localises to the a band. Its subcellular location is the m line. It is found in the cytoskeleton. Its function is as follows. Essential for the organization of sarcomeric thin filaments in skeletal muscle. This chain is Leiomodin-3, found in Danio rerio (Zebrafish).